The chain runs to 325 residues: Elongation factor P--(R)-beta-lysine ligase (325 aa).

76 to 78 (SPE) is a binding site for substrate. Residues 100 to 102 (RNE) and Asn109 each bind ATP. Tyr118 provides a ligand contact to substrate. 244–245 (EL) contributes to the ATP binding site. Substrate is bound at residue Glu251. Gly300 is a binding site for ATP.

It belongs to the class-II aminoacyl-tRNA synthetase family. EpmA subfamily. In terms of assembly, homodimer.

It carries out the reaction D-beta-lysine + L-lysyl-[protein] + ATP = N(6)-((3R)-3,6-diaminohexanoyl)-L-lysyl-[protein] + AMP + diphosphate + H(+). With EpmB is involved in the beta-lysylation step of the post-translational modification of translation elongation factor P (EF-P). Catalyzes the ATP-dependent activation of (R)-beta-lysine produced by EpmB, forming a lysyl-adenylate, from which the beta-lysyl moiety is then transferred to the epsilon-amino group of a conserved specific lysine residue in EF-P. The sequence is that of Elongation factor P--(R)-beta-lysine ligase from Klebsiella pneumoniae (strain 342).